Here is a 76-residue protein sequence, read N- to C-terminus: Conotoxin Am6.3 (76 aa).

The first 22 residues, methionine 1–alanine 22, serve as a signal peptide directing secretion. 3 disulfide bridges follow: cysteine 52-cysteine 67, cysteine 59-cysteine 71, and cysteine 66-cysteine 75.

It belongs to the conotoxin O1 superfamily. Is not hydroxylated. Expressed by the venom duct.

It is found in the secreted. Probable toxin that inhibits ion channels. In Conus amadis (Amadis cone), this protein is Conotoxin Am6.3.